Here is a 521-residue protein sequence, read N- to C-terminus: Cytochrome P450 monooxygenase gloO (521 aa).

The N-terminal stretch at 1-26 (MIAALFTTNLQLGAVGVFIFALLAFA) is a signal peptide. C464 lines the heme pocket.

Belongs to the cytochrome P450 family. Requires heme as cofactor.

It participates in mycotoxin biosynthesis. Functionally, cytochrome P450 monooxygenase; part of the gene cluster that mediates the biosynthesis of pneumocandins, lipohexapeptides of the echinocandin family that prevent fungal cell wall formation by non-competitive inhibition of beta-1,3-glucan synthase. The 10,12-dimethylmyristoyl side chain is synthesized by the reducing polyketide synthase gloL/GLPKS4. The thioesterase gloN/GLHYD exclusively interacts with gloL/GLPKS4 to maintain turnover of the polyketide side chain. The 10R,12S-dimethylmyristic acid is then transferred to the first thiolation domain of the nonribosomal peptide synthetase gloA/GLNRPS4 by the acyl-AMP ligase gloD/GLligase, followed by its acylation to L-ornithine to trigger elongation of the cyclic hexapeptide. L-ornithine, 4R-hydroxyl-L-proline (generated from L-proline by the dioxygenase gloF/GLOXY2), 3S-hydroxyl-L-homotyrosine (generated by gloG/GLHtyB, gloH/GLHtyA, gloI/GLHtyC, gloJ/GLHtyD and hydroxylated at C-3 by the dioxygenase gloM/GLOXY1), 3R-hydroxyl-L-glutamine (generated from L-glutamine probably by the dioxygenase gloE/GLOXY3) and 3S-hydroxyl-L-proline (generated from L-proline by the dioxygenase gloF/GLOXY2 to yield pneumocandin B0), or 3S-hydroxyl-4S-methyl-L-proline (generated from L-leucine by the dioxygenase gloC/GLOXY4 to yield pneumocandin A0) are sequentially added to the growing chain. The last C domain of gloA/GLNRPS4 is proposed to be responsible for cyclization by condensation to form the peptide bond between L-ornithine and 3S-hydroxyl-4S-methyl-L-proline (for pneumocandin A0) or 3S-hydroxyl-L-proline (for pneumocandin B0). Finally, the subsequent C-4 hydroxylation of 3S-hydroxyl-L-homotyrosine and L-ornithine dihydroxylation at C-4 and C-5 are performed by the cytochrome P450 monooxygenases gloP/GLP450-1 and gloO/GLP450-2, respectively. This chain is Cytochrome P450 monooxygenase gloO, found in Glarea lozoyensis (strain ATCC 20868 / MF5171).